Reading from the N-terminus, the 361-residue chain is GTPase Obg (361 aa).

The Obg domain maps to 1–159 (MKFVDEAFID…KNLKLELKVL (159 aa)). The region spanning 160 to 334 (ADVGLLGMPN…LIKTIYQHVK (175 aa)) is the OBG-type G domain. GTP is bound by residues 166-173 (GMPNAGKS), 191-195 (FTTLH), 213-216 (DLPG), 284-287 (NKLD), and 315-317 (SAL). Positions 173 and 193 each coordinate Mg(2+). Residues 339–361 (SEQPVEEVDPRFVPLPPESPETP) form a disordered region. Over residues 351 to 361 (VPLPPESPETP) the composition is skewed to pro residues.

This sequence belongs to the TRAFAC class OBG-HflX-like GTPase superfamily. OBG GTPase family. Monomer. Requires Mg(2+) as cofactor.

The protein localises to the cytoplasm. An essential GTPase which binds GTP, GDP and possibly (p)ppGpp with moderate affinity, with high nucleotide exchange rates and a fairly low GTP hydrolysis rate. Plays a role in control of the cell cycle, stress response, ribosome biogenesis and in those bacteria that undergo differentiation, in morphogenesis control. The sequence is that of GTPase Obg from Polaromonas sp. (strain JS666 / ATCC BAA-500).